The following is a 376-amino-acid chain: Chaperone protein DnaJ (376 aa).

The J domain occupies 5–70; that stretch reads DYYEVLGVGR…DKKAAYDQFG (66 aa). A CR-type zinc finger spans residues 132-210; it reads GLTKELKVPT…CHGNGRVEKT (79 aa). The Zn(2+) site is built by Cys145, Cys148, Cys162, Cys165, Cys184, Cys187, Cys198, and Cys201. CXXCXGXG motif repeat units follow at residues 145-152, 162-169, 184-191, and 198-205; these read CDSCDGSG, CGTCHGMG, CPTCHGRG, and CSKCHGNG.

It belongs to the DnaJ family. As to quaternary structure, homodimer. Requires Zn(2+) as cofactor.

The protein localises to the cytoplasm. In terms of biological role, participates actively in the response to hyperosmotic and heat shock by preventing the aggregation of stress-denatured proteins and by disaggregating proteins, also in an autonomous, DnaK-independent fashion. Unfolded proteins bind initially to DnaJ; upon interaction with the DnaJ-bound protein, DnaK hydrolyzes its bound ATP, resulting in the formation of a stable complex. GrpE releases ADP from DnaK; ATP binding to DnaK triggers the release of the substrate protein, thus completing the reaction cycle. Several rounds of ATP-dependent interactions between DnaJ, DnaK and GrpE are required for fully efficient folding. Also involved, together with DnaK and GrpE, in the DNA replication of plasmids through activation of initiation proteins. The sequence is that of Chaperone protein DnaJ from Shewanella amazonensis (strain ATCC BAA-1098 / SB2B).